Reading from the N-terminus, the 208-residue chain is Large ribosomal subunit protein uL4 (208 aa).

The segment at valine 50–lysine 83 is disordered.

This sequence belongs to the universal ribosomal protein uL4 family. As to quaternary structure, part of the 50S ribosomal subunit.

Functionally, one of the primary rRNA binding proteins, this protein initially binds near the 5'-end of the 23S rRNA. It is important during the early stages of 50S assembly. It makes multiple contacts with different domains of the 23S rRNA in the assembled 50S subunit and ribosome. Its function is as follows. Forms part of the polypeptide exit tunnel. The chain is Large ribosomal subunit protein uL4 from Mycoplasma capricolum subsp. capricolum (strain California kid / ATCC 27343 / NCTC 10154).